A 392-amino-acid chain; its full sequence is Trans-2-enoyl-CoA reductase [NADH] (392 aa).

Residues 74-75 (FE), 111-112 (DA), and 141-142 (LA) each bind NAD(+). Residue Tyr227 coordinates substrate. Residue Tyr237 is the Proton donor of the active site. NAD(+) contacts are provided by residues Lys246 and 276-278 (VVT).

This sequence belongs to the TER reductase family. As to quaternary structure, monomer.

It carries out the reaction a 2,3-saturated acyl-CoA + NAD(+) = a (2E)-enoyl-CoA + NADH + H(+). Its pathway is lipid metabolism; fatty acid biosynthesis. Involved in the fatty acid synthesis (FAS II). Catalyzes the reduction of a carbon-carbon double bond in an enoyl moiety that is covalently linked to a coenzyme A (CoA). This is Trans-2-enoyl-CoA reductase [NADH] from Brachyspira hyodysenteriae (strain ATCC 49526 / WA1).